The primary structure comprises 273 residues: 2,3,4,5-tetrahydropyridine-2,6-dicarboxylate N-succinyltransferase (273 aa).

This sequence belongs to the transferase hexapeptide repeat family.

The protein resides in the cytoplasm. The enzyme catalyses (S)-2,3,4,5-tetrahydrodipicolinate + succinyl-CoA + H2O = (S)-2-succinylamino-6-oxoheptanedioate + CoA. The protein operates within amino-acid biosynthesis; L-lysine biosynthesis via DAP pathway; LL-2,6-diaminopimelate from (S)-tetrahydrodipicolinate (succinylase route): step 1/3. The protein is 2,3,4,5-tetrahydropyridine-2,6-dicarboxylate N-succinyltransferase of Acinetobacter baumannii (strain AB307-0294).